Reading from the N-terminus, the 155-residue chain is Small ribosomal subunit protein uS7cz/uS7cy (155 aa).

It belongs to the universal ribosomal protein uS7 family. As to quaternary structure, part of the 30S ribosomal subunit.

It localises to the plastid. It is found in the chloroplast. In terms of biological role, one of the primary rRNA binding proteins, it binds directly to 16S rRNA where it nucleates assembly of the head domain of the 30S subunit. The protein is Small ribosomal subunit protein uS7cz/uS7cy (rps7-A) of Ipomoea purpurea (Common morning glory).